The sequence spans 1395 residues: DNA polymerase II large subunit (1395 aa).

Disordered stretches follow at residues I279–E320 and G657–T704. Acidic residues predominate over residues E283 to E312. 2 stretches are compositionally biased toward basic and acidic residues: residues G661–L671 and D690–D700.

Belongs to the archaeal DNA polymerase II family. As to quaternary structure, heterodimer of a large subunit and a small subunit. Post-translationally, this protein undergoes a protein self splicing that involves a post-translational excision of the intervening region (intein) followed by peptide ligation.

The enzyme catalyses DNA(n) + a 2'-deoxyribonucleoside 5'-triphosphate = DNA(n+1) + diphosphate. It carries out the reaction Exonucleolytic cleavage in the 3'- to 5'-direction to yield nucleoside 5'-phosphates.. In terms of biological role, possesses two activities: a DNA synthesis (polymerase) and an exonucleolytic activity that degrades single-stranded DNA in the 3'- to 5'-direction. Has a template-primer preference which is characteristic of a replicative DNA polymerase. This Haloarcula marismortui (strain ATCC 43049 / DSM 3752 / JCM 8966 / VKM B-1809) (Halobacterium marismortui) protein is DNA polymerase II large subunit.